The sequence spans 60 residues: Homeobox protein engrailed-like B (60 aa).

Positions 1-41 (VEQLQRLKSEFGASRYLTEARRQALAQELRLNEAQIKIWFQ) form a DNA-binding region, homeobox.

It belongs to the engrailed homeobox family.

It is found in the nucleus. The protein is Homeobox protein engrailed-like B of Myxine glutinosa (Atlantic hagfish).